The chain runs to 359 residues: Outer membrane protein P2 (359 aa).

The first 20 residues, Met1–Ala20, serve as a signal peptide directing secretion.

Belongs to the Gram-negative porin family. As to quaternary structure, homotrimer.

The protein resides in the cell outer membrane. Functionally, forms pores that allow passive diffusion of small molecules across the outer membrane. The polypeptide is Outer membrane protein P2 (ompP2) (Haemophilus influenzae (strain ATCC 51907 / DSM 11121 / KW20 / Rd)).